A 310-amino-acid chain; its full sequence is Altered inheritance of mitochondria protein 46, mitochondrial (310 aa).

A mitochondrion-targeting transit peptide spans 1–20; it reads MRLISKVLVKTNCLEVGMRR.

Belongs to the AIM18/AIM46 family.

The protein localises to the mitochondrion. The sequence is that of Altered inheritance of mitochondria protein 46, mitochondrial (AIM46) from Saccharomyces cerevisiae (strain YJM789) (Baker's yeast).